We begin with the raw amino-acid sequence, 621 residues long: Glutathione-regulated potassium-efflux system protein KefC (621 aa).

13 consecutive transmembrane segments (helical) span residues 4-24, 26-46, 54-74, 90-110, 114-134, 149-169, 178-198, 218-237, 238-257, 270-290, 294-314, 326-346, and 359-379; these read HTLIQALIYLGAAALIVPIAV, LGLGSVLGYLIAGCIIGPWAL, AILHFAEIGVVLMLFVIGLEL, GALQMVACGVLIGLFCMLLGL, VAELIGMTLALSSTAIAMQAM, FAVLLFQDIAAIPLVAMIPLL, LMAFALSALKVAAALALVVVL, VFSAVALFLVFGFGLLLEEV, GLSMAMGAFLAGVLLASSEY, GLLLGLFFIGVGMSIDFGTLV, LRIVILLVGFLAIKMLMLWLI, RWFAVLLGQGSEFAFVVFGAA, and ALTLAVALSMAATPILLVLLT. The RCK N-terminal domain maps to 399 to 518; it reads QPRVIVAGFG…AGVEAPERET (120 aa). A disordered region spans residues 598 to 621; it reads GWQGTEEGRHTGDIADEPENKPSA.

Belongs to the monovalent cation:proton antiporter 2 (CPA2) transporter (TC 2.A.37) family. KefC subfamily. As to quaternary structure, homodimer. Interacts with the regulatory subunit KefF.

The protein localises to the cell inner membrane. Pore-forming subunit of a potassium efflux system that confers protection against electrophiles. Catalyzes K(+)/H(+) antiport. The protein is Glutathione-regulated potassium-efflux system protein KefC of Klebsiella pneumoniae subsp. pneumoniae (strain ATCC 700721 / MGH 78578).